The following is a 548-amino-acid chain: Probable malate:quinone oxidoreductase (548 aa).

A disordered region spans residues 521–548 (DKPQAADSTPKPQLKPQPVQKEVADIAL). A compositionally biased stretch (low complexity) spans 530–541 (PKPQLKPQPVQK).

This sequence belongs to the MQO family. FAD serves as cofactor.

The enzyme catalyses (S)-malate + a quinone = a quinol + oxaloacetate. It functions in the pathway carbohydrate metabolism; tricarboxylic acid cycle; oxaloacetate from (S)-malate (quinone route): step 1/1. In Shigella boydii serotype 4 (strain Sb227), this protein is Probable malate:quinone oxidoreductase.